Here is an 820-residue protein sequence, read N- to C-terminus: MEVEKSKSRHEIREERADYEGSPVREHRDGRRKEKDHRSKDKEKDYDREKIRDKDHRRDKEKERDRKRSRDEDTEKEISRGRDKEREKDKSRDRVKEKDKEKERNRHKDRENERDNEKEKDKDRARVKERASKKSHEDDDETHKAAERYEHSDNRGLNEGGDNVDAASSGKEASALDLQNRILKMREERKKKAEDASDALSWVARSRKIEEKRNAEKQRAQQLSRIFEEQDNLNQGENEDGEDGEHLSGVKVLHGLEKVVEGGAVILTLKDQSVLTDGDVNNEIDMLENVEIGEQKRRNEAYEAAKKKKGIYDDKFNDDPGAEKKMLPQYDEAATDEGIFLDAKGRFTGEAEKKLEELRKRIQGQTTHTFEDLNSSAKVSSDYFSQEEMLKFKKPKKKKQLRKKDKLDLSMLEAEAVASGLGAEDLGSRKDGRRQAMKEEKERIEYEKRSNAYQEAIAKADEASRLLRREQVQPFKRDEDESMVLADDAEDLYKSLEKARRLALIKKEEAGSGPQAVAHLVASSTNQTTDDNTTTGDETQENTVVFTEMGDFVWGLQRENDVRKPESEDVFMEEDVAPKAPVEVKEEHPDGLTEVNDTDMDAAEDSSDTKEITPDENIHEVAVGKGLSGALKLLKDRGTLKEKVEWGGRNMDKKKSKLVGIVDDDGGKESKDKESKDRFKDIRIERTDEFGRTLTPKEAFRLLSHKFHGKGPGKMKEEKRMKQYQEELKLKQMKNSDTPSQSVQRMREAQAQLKTPYLVLSGHVKPGQTSDPQSGFATVEKDVPGSLTPMLGDRKVEHFLGIKRKSEPGNSDTPPKRPKP.

Composition is skewed to basic and acidic residues over residues 1–156 (MEVE…DNRG), 210–219 (EEKRNAEKQR), and 426–445 (LGSRKDGRRQAMKEEKERIE). Disordered stretches follow at residues 1 to 177 (MEVE…SALD), 210 to 248 (EEKRNAEKQRAQQLSRIFEEQDNLNQGENEDGEDGEHLS), 420 to 445 (GLGAEDLGSRKDGRRQAMKEEKERIE), 523 to 544 (SSTNQTTDDNTTTGDETQENTV), 564 to 617 (KPES…PDEN), 657 to 678 (KLVGIVDDDGGKESKDKESKDR), 729 to 748 (KLKQMKNSDTPSQSVQRMRE), and 762 to 820 (GHVK…RPKP). Ser-22 carries the post-translational modification Phosphoserine. Coiled coils occupy residues 58–120 (RDKE…EKEK), 171–235 (KEAS…NLNQ), and 433–510 (RRQA…KEEA). The span at 525–543 (TNQTTDDNTTTGDETQENT) shows a compositional bias: low complexity. A compositionally biased stretch (basic and acidic residues) spans 582-591 (VEVKEEHPDG). Positions 596-606 (NDTDMDAAEDS) are enriched in acidic residues. 2 stretches are compositionally biased toward basic and acidic residues: residues 607-617 (SDTKEITPDEN) and 665-678 (DGGKESKDKESKDR). Polar residues-rich tracts occupy residues 733-744 (MKNSDTPSQSVQ) and 767-776 (GQTSDPQSGF). The segment covering 792–807 (GDRKVEHFLGIKRKSE) has biased composition (basic and acidic residues).

This sequence belongs to the SNU66/SART1 family. In terms of tissue distribution, expressed in lateral root cap, columella, meristem and quiescent center (QC). Expressed in young leaves.

It localises to the nucleus. Its function is as follows. Plays a role in root, shoot and flower development. Probably required for normal root and shoot meristem organization and maintenance and the proper expression of PIN and PLT genes. Involved in leaf vasculature patterning. This is SART-1 family protein DOT2 from Arabidopsis thaliana (Mouse-ear cress).